Here is a 76-residue protein sequence, read N- to C-terminus: uncharacterized protein (76 aa).

To K.pneumoniae LtrA, E.coli YjiE, and YhcS.

This is an uncharacterized protein from Escherichia coli O6:H1 (strain CFT073 / ATCC 700928 / UPEC).